Reading from the N-terminus, the 129-residue chain is Small ribosomal subunit protein uS11 (129 aa).

This sequence belongs to the universal ribosomal protein uS11 family. As to quaternary structure, part of the 30S ribosomal subunit. Interacts with proteins S7 and S18. Binds to IF-3.

Its function is as follows. Located on the platform of the 30S subunit, it bridges several disparate RNA helices of the 16S rRNA. Forms part of the Shine-Dalgarno cleft in the 70S ribosome. This is Small ribosomal subunit protein uS11 from Halalkalibacterium halodurans (strain ATCC BAA-125 / DSM 18197 / FERM 7344 / JCM 9153 / C-125) (Bacillus halodurans).